The primary structure comprises 433 residues: Signal recognition particle 54 kDa protein (433 aa).

Residues 106–113, 186–190, and 244–247 contribute to the GTP site; these read GVEGSGKT, DTAGR, and TKMD.

Belongs to the GTP-binding SRP family. SRP54 subfamily. Part of the signal recognition particle protein translocation system, which is composed of SRP and FtsY. Archaeal SRP consists of a 7S RNA molecule of 300 nucleotides and two protein subunits: SRP54 and SRP19.

The protein resides in the cytoplasm. The enzyme catalyses GTP + H2O = GDP + phosphate + H(+). Its function is as follows. Involved in targeting and insertion of nascent membrane proteins into the cytoplasmic membrane. Binds to the hydrophobic signal sequence of the ribosome-nascent chain (RNC) as it emerges from the ribosomes. The SRP-RNC complex is then targeted to the cytoplasmic membrane where it interacts with the SRP receptor FtsY. This chain is Signal recognition particle 54 kDa protein, found in Pyrobaculum aerophilum (strain ATCC 51768 / DSM 7523 / JCM 9630 / CIP 104966 / NBRC 100827 / IM2).